Here is a 346-residue protein sequence, read N- to C-terminus: Methylthioribose-1-phosphate isomerase (346 aa).

Substrate is bound by residues 46-48, R89, and Q196; that span reads RGA. D237 (proton donor) is an active-site residue. 247–248 provides a ligand contact to substrate; the sequence is NK.

It belongs to the eIF-2B alpha/beta/delta subunits family. MtnA subfamily.

The catalysed reaction is 5-(methylsulfanyl)-alpha-D-ribose 1-phosphate = 5-(methylsulfanyl)-D-ribulose 1-phosphate. The protein operates within amino-acid biosynthesis; L-methionine biosynthesis via salvage pathway; L-methionine from S-methyl-5-thio-alpha-D-ribose 1-phosphate: step 1/6. Functionally, catalyzes the interconversion of methylthioribose-1-phosphate (MTR-1-P) into methylthioribulose-1-phosphate (MTRu-1-P). The polypeptide is Methylthioribose-1-phosphate isomerase (Geotalea daltonii (strain DSM 22248 / JCM 15807 / FRC-32) (Geobacter daltonii)).